The chain runs to 893 residues: NEDD4-binding protein 1 (893 aa).

The KH-like domain maps to 59-143 (QEAVHSAKEY…IQQFVKLFES (85 aa)). The tract at residues 213–243 (EYTQSAATGPSSARDEVVVQEDSRNKARTPV) is disordered. The span at 214-223 (YTQSAATGPS) shows a compositional bias: polar residues. The segment covering 225–237 (ARDEVVVQEDSRN) has biased composition (basic and acidic residues). At threonine 241 the chain carries Phosphothreonine. Phosphoserine occurs at positions 257, 269, and 299. Disordered regions lie at residues 273-339 (DALS…DGKD), 394-433 (RDFPPCTVYPDASQSRNAGVGSTTNELTADSTPKKAQSHT), and 472-564 (IWGS…PPLP). Polar residues-rich tracts occupy residues 405–433 (ASQSRNAGVGSTTNELTADSTPKKAQSHT) and 523–537 (GFQQQTEPLLPNNTK). Over residues 551–564 (QPKPNYPPLSPPLP) the composition is skewed to pro residues. The residue at position 560 (serine 560) is a Phosphoserine. The 153-residue stretch at 615 to 767 (LKHIVIDGSN…LGRNGPRLEE (153 aa)) folds into the RNase NYN domain. The tract at residues 793–820 (PGFRSPSTQVANNSHQPPPRIQTSSSPW) is disordered. Over residues 797-820 (SPSTQVANNSHQPPPRIQTSSSPW) the composition is skewed to polar residues. Residues 846 to 893 (RSSAETSELREALLKIFPDSEQKLKIDQILAAHPYMKDLNALSALVLD) form a coCUN region.

It belongs to the N4BP1 family. Interacts with NEDD4. Interacts with ITCH (via WW domain 2). Proteolytically cleaved by CASP8 downstream of TLR3 or TLR4, leading to its inactivation. Mainly cleaved at Asp-488 by CASP8. Cleaved by caspase-like protein MALT1, leading to its inactivation. Post-translationally, mono- and polyubiquitinated on the CoCUN region. Monoubiquitinated by NEDD4. Polyubiquitinated, leading to its degradation by the proteasome. Sumoylated with SUMO1, abrogating polyubiquitination and subsequent degradation. Desumoylated by SENP1, leading to accumulation in PML nuclear bodies.

The protein resides in the cytoplasm. It localises to the cytosol. Its subcellular location is the nucleus. The protein localises to the nucleolus. It is found in the PML body. Proteolytic cleavage by CASP8 or MALT1 leads to its inactivation. Functionally, potent suppressor of cytokine production that acts as a regulator of innate immune signaling and inflammation. Acts as a key negative regulator of select cytokine and chemokine responses elicited by TRIF-independent Toll-like receptors (TLRs), thereby limiting inflammatory cytokine responses to minor insults. In response to more threatening pathogens, cleaved by CASP8 downstream of TLR3 or TLR4, leading to its inactivation, thereby allowing production of inflammatory cytokines. Acts as a restriction factor against some viruses: restricts viral replication by binding to mRNA viruses and mediating their degradation via its ribonuclease activity. Also acts as an inhibitor of the E3 ubiquitin-protein ligase ITCH: acts by interacting with the second WW domain of ITCH, leading to compete with ITCH's substrates and impairing ubiquitination of substrates. The protein is NEDD4-binding protein 1 of Mus musculus (Mouse).